The chain runs to 83 residues: Small ribosomal subunit protein bS18 (83 aa).

This sequence belongs to the bacterial ribosomal protein bS18 family. Part of the 30S ribosomal subunit. Forms a tight heterodimer with protein bS6.

Its function is as follows. Binds as a heterodimer with protein bS6 to the central domain of the 16S rRNA, where it helps stabilize the platform of the 30S subunit. The chain is Small ribosomal subunit protein bS18 from Tropheryma whipplei (strain TW08/27) (Whipple's bacillus).